The primary structure comprises 147 residues: MAERPEDLNLPNAVITRIIKEALPDGVNISKEARSAISRAASVFVLYATSCANNFAMKGKRKTLNASDVLSAMEEMEFQRFVTPLKEALEAYRREQKGKKEASEQKKKDKDKKTDSEEQDKSRDEDNDEDEERLEEEEQNEEEEVDN.

Residue Ala-2 is modified to N-acetylalanine. At Thr-83 the chain carries Phosphothreonine. Positions 85–146 (LKEALEAYRR…EEQNEEEEVD (62 aa)) form a coiled coil. Basic and acidic residues predominate over residues 93 to 124 (RREQKGKKEASEQKKKDKDKKTDSEEQDKSRD). The interval 93–147 (RREQKGKKEASEQKKKDKDKKTDSEEQDKSRDEDNDEDEERLEEEEQNEEEEVDN) is disordered. Position 122 is a phosphoserine (Ser-122). Residues 125–147 (EDNDEDEERLEEEEQNEEEEVDN) show a composition bias toward acidic residues.

As to quaternary structure, component of the DNA polymerase epsilon complex consisting of four subunits: the catalytic subunit POLE and the accessory subunits POLE2, POLE3 and POLE4. Interaction with POLE4 is a prerequisite for further binding with POLE and POLE2. Heterodimer with CHRAC1; binds to DNA. Component of the CHRAC ISWI chromatin remodeling complex at least composed of SMARCA5/SNF2H, BAZ1A/ACF1, CHRAC1 and POLE3; the complex preferentially binds DNA through the CHRAC1-POLE3 heterodimer and possesses ATP-dependent nucleosome-remodeling activity. Within the complex, the heterodimer with CHRAC1 interacts with SMARCA5/SNF2H; the interaction is direct and enhances nucleosome sliding activity by the SMARCA5/SNF2H and BAZ1A/ACF1 interaction. Within the complex, the heterodimer with CHRAC1 interacts with BAZ1A/ACF1; the interactions are direct.

It is found in the nucleus. Functionally, accessory component of the DNA polymerase epsilon complex. Participates in DNA repair and in chromosomal DNA replication. Forms a complex with CHRAC1 and binds naked DNA, which is then incorporated into chromatin, aided by the nucleosome-remodeling activity of ISWI/SNF2H and ACF1. Does not enhance nucleosome sliding activity of the ACF-5 ISWI chromatin remodeling complex. This is DNA polymerase epsilon subunit 3 (POLE3) from Bos taurus (Bovine).